The primary structure comprises 146 residues: Hemoglobin subunit beta-1 (146 aa).

Residues 2–146 (GLTAHDRQLI…IADALGKGYH (145 aa)) form the Globin domain. Heme b-binding residues include His-63 and His-92.

The protein belongs to the globin family. In terms of assembly, heterotetramer of two alpha chains and two beta chains. As to expression, red blood cells.

Involved in oxygen transport from the lung to the various peripheral tissues. This Xenopus laevis (African clawed frog) protein is Hemoglobin subunit beta-1 (hbb1).